Reading from the N-terminus, the 292-residue chain is Nitrogenase iron protein 1 (292 aa).

12-19 (GKGGIGKS) is an ATP binding site. Position 101 (cysteine 101) interacts with [4Fe-4S] cluster. Arginine 104 is modified (ADP-ribosylarginine; by dinitrogenase reductase ADP-ribosyltransferase). A [4Fe-4S] cluster-binding site is contributed by cysteine 135.

The protein belongs to the NifH/BchL/ChlL family. In terms of assembly, homodimer. [4Fe-4S] cluster serves as cofactor. The reversible ADP-ribosylation of Arg-104 inactivates the nitrogenase reductase and regulates nitrogenase activity.

It catalyses the reaction N2 + 8 reduced [2Fe-2S]-[ferredoxin] + 16 ATP + 16 H2O = H2 + 8 oxidized [2Fe-2S]-[ferredoxin] + 2 NH4(+) + 16 ADP + 16 phosphate + 6 H(+). Its function is as follows. The key enzymatic reactions in nitrogen fixation are catalyzed by the nitrogenase complex, which has 2 components: the iron protein and the molybdenum-iron protein. The sequence is that of Nitrogenase iron protein 1 (nifH1) from Paenibacillus durus (Paenibacillus azotofixans).